A 666-amino-acid chain; its full sequence is Probable potassium transport system protein Kup (666 aa).

The next 12 helical transmembrane spans lie at 16–36 (GFII…LYTM), 58–78 (ISLI…LIAL), 100–120 (PWLI…GALT), 141–161 (IYQN…VLFG), 165–185 (FGTG…FSFL), 221–241 (IFIL…YSDL), 253–273 (WPFV…WILA), 294–314 (VYLV…LISG), 343–363 (LYIP…VLYF), 373–393 (YGLA…YYLI), 399–419 (PFLA…FFWA), and 424–444 (FMHG…VMFI).

The protein belongs to the HAK/KUP transporter (TC 2.A.72) family.

It is found in the cell membrane. The enzyme catalyses K(+)(in) + H(+)(in) = K(+)(out) + H(+)(out). Functionally, transport of potassium into the cell. Likely operates as a K(+):H(+) symporter. This is Probable potassium transport system protein Kup from Streptococcus pyogenes serotype M6 (strain ATCC BAA-946 / MGAS10394).